Consider the following 150-residue polypeptide: 3-hydroxyacyl-[acyl-carrier-protein] dehydratase FabZ (150 aa).

Histidine 51 is a catalytic residue.

This sequence belongs to the thioester dehydratase family. FabZ subfamily.

Its subcellular location is the cytoplasm. The enzyme catalyses a (3R)-hydroxyacyl-[ACP] = a (2E)-enoyl-[ACP] + H2O. Its function is as follows. Involved in unsaturated fatty acids biosynthesis. Catalyzes the dehydration of short chain beta-hydroxyacyl-ACPs and long chain saturated and unsaturated beta-hydroxyacyl-ACPs. The polypeptide is 3-hydroxyacyl-[acyl-carrier-protein] dehydratase FabZ (Rubrobacter xylanophilus (strain DSM 9941 / JCM 11954 / NBRC 16129 / PRD-1)).